Reading from the N-terminus, the 511-residue chain is Sodium/hydrogen exchanger 9B1 (511 aa).

Positions 1 to 10 (MHTTESKDEH) are enriched in basic and acidic residues. The disordered stretch occupies residues 1–41 (MHTTESKDEHLEDENFQTSTTPQSLIDPNSTAHEETKTVIS). The segment covering 16–31 (FQTSTTPQSLIDPNST) has biased composition (polar residues). 13 consecutive transmembrane segments (helical) span residues 67-87 (IITNGVILFVIWCTTWSVLGS), 95-115 (LFGLLIIFCSAIIGGKILQLI), 116-136 (RIPLVPPLPPLLGMLLAGFTI), 152-172 (WSSILRSTALTVILIRAGLGL), 187-207 (LAVGPCLMEASAAAVFSHFIM), 215-235 (FLLGFVLGAVSPAIVVPSMMV), 260-280 (VLAITGFNTCLSIVFSSGGIV), 284-304 (IASIKSVSISLLAGIVLGFFV), 337-357 (IGLHGTGGLFTLVLSFIAGTK), 368-388 (IITNVWDIFQPLLFGLVGAEV), 398-418 (IGIFVATLSLALCVRILVTYI), 431-451 (IFIALAWMPKATVQAVLGPLV), and 472-492 (VAFLAILITAPNGALLMGILG).

Belongs to the monovalent cation:proton antiporter 1 (CPA1) transporter (TC 2.A.36) family.

It is found in the cell projection. The protein resides in the cilium. It localises to the flagellum membrane. Sperm-specific Na(+)/H(+) exchanger involved in intracellular pH regulation of spermatozoa. Involved in sperm motility and fertility. The polypeptide is Sodium/hydrogen exchanger 9B1 (SLC9B1) (Macaca fascicularis (Crab-eating macaque)).